We begin with the raw amino-acid sequence, 153 residues long: Sec-independent protein translocase protein TatB (153 aa).

The chain crosses the membrane as a helical span at residues 1–21; it reads MFGISFSELLLVGLVALLVLG. Residues 78 to 153 form a disordered region; it reads MFAQNQHPET…HDSSLPPRAP (76 aa).

Belongs to the TatB family. In terms of assembly, the Tat system comprises two distinct complexes: a TatABC complex, containing multiple copies of TatA, TatB and TatC subunits, and a separate TatA complex, containing only TatA subunits. Substrates initially bind to the TatABC complex, which probably triggers association of the separate TatA complex to form the active translocon.

The protein resides in the cell inner membrane. Part of the twin-arginine translocation (Tat) system that transports large folded proteins containing a characteristic twin-arginine motif in their signal peptide across membranes. Together with TatC, TatB is part of a receptor directly interacting with Tat signal peptides. TatB may form an oligomeric binding site that transiently accommodates folded Tat precursor proteins before their translocation. The sequence is that of Sec-independent protein translocase protein TatB from Pseudomonas savastanoi pv. phaseolicola (strain 1448A / Race 6) (Pseudomonas syringae pv. phaseolicola (strain 1448A / Race 6)).